We begin with the raw amino-acid sequence, 440 residues long: Glutamate-1-semialdehyde 2,1-aminomutase (440 aa).

The residue at position 271 (K271) is an N6-(pyridoxal phosphate)lysine.

Belongs to the class-III pyridoxal-phosphate-dependent aminotransferase family. HemL subfamily. In terms of assembly, homodimer. Pyridoxal 5'-phosphate is required as a cofactor.

It localises to the cytoplasm. The catalysed reaction is (S)-4-amino-5-oxopentanoate = 5-aminolevulinate. The protein operates within porphyrin-containing compound metabolism; protoporphyrin-IX biosynthesis; 5-aminolevulinate from L-glutamyl-tRNA(Glu): step 2/2. The chain is Glutamate-1-semialdehyde 2,1-aminomutase from Chlamydia pneumoniae (Chlamydophila pneumoniae).